Consider the following 293-residue polypeptide: Pyridoxal 5'-phosphate synthase subunit PdxS (293 aa).

Asp23 contributes to the D-ribose 5-phosphate binding site. The Schiff-base intermediate with D-ribose 5-phosphate role is filled by Lys80. Residue Gly152 coordinates D-ribose 5-phosphate. Residue Arg164 participates in D-glyceraldehyde 3-phosphate binding. D-ribose 5-phosphate-binding positions include Gly213 and 234 to 235; that span reads GS.

This sequence belongs to the PdxS/SNZ family. In terms of assembly, in the presence of PdxT, forms a dodecamer of heterodimers.

It carries out the reaction aldehydo-D-ribose 5-phosphate + D-glyceraldehyde 3-phosphate + L-glutamine = pyridoxal 5'-phosphate + L-glutamate + phosphate + 3 H2O + H(+). The protein operates within cofactor biosynthesis; pyridoxal 5'-phosphate biosynthesis. Its function is as follows. Catalyzes the formation of pyridoxal 5'-phosphate from ribose 5-phosphate (RBP), glyceraldehyde 3-phosphate (G3P) and ammonia. The ammonia is provided by the PdxT subunit. Can also use ribulose 5-phosphate and dihydroxyacetone phosphate as substrates, resulting from enzyme-catalyzed isomerization of RBP and G3P, respectively. This chain is Pyridoxal 5'-phosphate synthase subunit PdxS, found in Methanothermobacter thermautotrophicus (strain ATCC 29096 / DSM 1053 / JCM 10044 / NBRC 100330 / Delta H) (Methanobacterium thermoautotrophicum).